Here is a 126-residue protein sequence, read N- to C-terminus: uncharacterized protein (126 aa).

The region spanning 8-106 is the HTH hxlR-type domain; the sequence is ISVEATLEVI…WGANHINRVY (99 aa).

This is an uncharacterized protein from Bacillus subtilis (strain 168).